Consider the following 140-residue polypeptide: Profilin-2 (140 aa).

An N-acetylalanine modification is found at alanine 2.

Belongs to the profilin family. Occurs in many kinds of cells as a complex with monomeric actin in a 1:1 ratio. Interacts with PFN2. Interacts with ACTMAP (via N-terminus); the interaction may facilitate efficient cleavage of the acetylated N-terminus of immature actin by ACTMAP.

It localises to the cytoplasm. It is found in the cytoskeleton. In terms of biological role, binds to actin and affects the structure of the cytoskeleton. At high concentrations, profilin prevents the polymerization of actin, whereas it enhances it at low concentrations. By binding to PIP2, it inhibits the formation of IP3 and DG. The sequence is that of Profilin-2 (PFN2) from Bos taurus (Bovine).